We begin with the raw amino-acid sequence, 637 residues long: Chaperone protein HtpG (637 aa).

The segment at 1 to 345 is a; substrate-binding; that stretch reads MSQQETHGFQ…SNDLPLNVSR (345 aa). Residues 346 to 562 form a b region; that stretch reads EILQDNQVTT…EGEMSTQMIK (217 aa). A c region spans residues 563-637; it reads LMQAAGQAVP…MNQMLLANAK (75 aa).

The protein belongs to the heat shock protein 90 family. In terms of assembly, homodimer.

The protein resides in the cytoplasm. Functionally, molecular chaperone. Has ATPase activity. This Shewanella denitrificans (strain OS217 / ATCC BAA-1090 / DSM 15013) protein is Chaperone protein HtpG.